A 360-amino-acid chain; its full sequence is Glycerol-1-phosphate dehydrogenase [NAD(P)+] (360 aa).

NAD(+)-binding positions include 108 to 112 (GRVID) and 130 to 133 (TAAS). Residue D135 participates in substrate binding. An NAD(+)-binding site is contributed by S139. Residue D182 coordinates substrate. Residues D182 and H262 each contribute to the Zn(2+) site. H266 contacts substrate. Zn(2+) is bound at residue H278.

This sequence belongs to the glycerol-1-phosphate dehydrogenase family. Requires Zn(2+) as cofactor.

Its subcellular location is the cytoplasm. The enzyme catalyses sn-glycerol 1-phosphate + NAD(+) = dihydroxyacetone phosphate + NADH + H(+). It carries out the reaction sn-glycerol 1-phosphate + NADP(+) = dihydroxyacetone phosphate + NADPH + H(+). It participates in membrane lipid metabolism; glycerophospholipid metabolism. Functionally, catalyzes the NAD(P)H-dependent reduction of dihydroxyacetonephosphate (DHAP or glycerone phosphate) to glycerol 1-phosphate (G1P). The G1P thus generated is used as the glycerophosphate backbone of phospholipids in the cellular membranes of Archaea. The protein is Glycerol-1-phosphate dehydrogenase [NAD(P)+] of Methanoculleus marisnigri (strain ATCC 35101 / DSM 1498 / JR1).